A 518-amino-acid polypeptide reads, in one-letter code: MTAYKPYRHQLRRSLFASTIFPVFLVIIIGLVSFYAIYIWIEHRTIHQHVDESQSSLHHTEKQIQTFITQHNNSFQELDLTNHHDVTATKRGLLKLIHQQPATLYYELSGPNQFITNNYEHLNTKNMYLFSTHQLKFKNSTYMLKIYMANTPRLSEIKKDSRQFALIVDQYDNILYANDDRFTIGEKYRPQQFGFMNESVKLNHADHRLIIYKDIHENIEDGITLLIVMAVVLVLLVIFGFISADNMAKRQTKDIETIIQKIYYAKNRHLGTYTPLKNNSELEEINNYIYDLFESNEQLIHSIEHTERRLRDIQLKEIERQFQPHFLFNTMQTIQYLITLSPKLAQTVVQQLSQMLRYSLRTNSHTVELNEELNYIEQYVAIQNIRFDDMIKLHIESSEEARHQTIGKMMLQPLIENAIKHGRDTESLDITIRLTLARQNLHVLVCDNGIGMSSSRLQYVRQSLNNDVFDTKHLGLNHLHNKAMIQYGSHARLHIFSKRNQGTLICYKIPLSRGNVDV.

The next 2 helical transmembrane spans lie at 20 to 40 (IFPVFLVIIIGLVSFYAIYIW) and 222 to 242 (GITLLIVMAVVLVLLVIFGFI). Positions 297 to 513 (EQLIHSIEHT…LICYKIPLSR (217 aa)) constitute a Histidine kinase domain. At His325 the chain carries Phosphohistidine; by autocatalysis.

In terms of processing, autophosphorylated.

It localises to the cell membrane. It carries out the reaction ATP + protein L-histidine = ADP + protein N-phospho-L-histidine.. Functionally, member of the two-component regulatory system HptS/HptR that regulates genes involved in hexose phosphate transport system in response to changes in extracellular phosphate sources. May act as a sensor protein kinase which is autophosphorylated at a histidine residue and transfers its phosphate group to the conserved aspartic acid residue in the regulatory domain of HptS. In turn, HptS antagonizes CcpA-dependent transcription of a subset of CcpA-regulated genes involved in antibiotic susceptibility. In Staphylococcus aureus (strain MSSA476), this protein is Sensor protein kinase HptS (hptS).